Consider the following 262-residue polypeptide: Thiazole synthase (262 aa).

Lys-96 (schiff-base intermediate with DXP) is an active-site residue. 1-deoxy-D-xylulose 5-phosphate-binding positions include Gly-157, 184–185 (AG), and 206–207 (NT).

The protein belongs to the ThiG family. Homotetramer. Forms heterodimers with either ThiH or ThiS.

Its subcellular location is the cytoplasm. The catalysed reaction is [ThiS sulfur-carrier protein]-C-terminal-Gly-aminoethanethioate + 2-iminoacetate + 1-deoxy-D-xylulose 5-phosphate = [ThiS sulfur-carrier protein]-C-terminal Gly-Gly + 2-[(2R,5Z)-2-carboxy-4-methylthiazol-5(2H)-ylidene]ethyl phosphate + 2 H2O + H(+). Its pathway is cofactor biosynthesis; thiamine diphosphate biosynthesis. In terms of biological role, catalyzes the rearrangement of 1-deoxy-D-xylulose 5-phosphate (DXP) to produce the thiazole phosphate moiety of thiamine. Sulfur is provided by the thiocarboxylate moiety of the carrier protein ThiS. In vitro, sulfur can be provided by H(2)S. This chain is Thiazole synthase, found in Legionella pneumophila (strain Corby).